Reading from the N-terminus, the 2399-residue chain is Norsolorinic acid synthase (2399 aa).

A starter unit:ACP transacylase (SAT) domain region spans residues 10-247 (LVFGDQTYDF…RQIPIYVPAH (238 aa)). The region spanning 372–805 (KSKLAIVSMS…GGNTALLIED (434 aa)) is the Ketosynthase family 3 (KS3) domain. Catalysis depends on for beta-ketoacyl synthase activity residues Cys-544, His-679, and His-722. The interval 905–1192 (FAFTGQGSQY…LCGMIKNILG (288 aa)) is malonyl-CoA:ACP transacylase (MAT) domain. Residue Ser-995 is the For acyl/malonyl transferase activity of the active site. The interval 1307–1327 (VQEAPAAKTETKKMSKLDPTK) is disordered. Basic and acidic residues predominate over residues 1315 to 1327 (TETKKMSKLDPTK). Positions 1340–1483 (HKVIEEKTEP…CTVRFTTDSQ (144 aa)) are N-terminal hotdog fold. In terms of domain architecture, PKS/mFAS DH spans 1340–1658 (HKVIEEKTEP…LRSVPRKALR (319 aa)). The segment at 1353–1658 (QFTVETDISR…LRSVPRKALR (306 aa)) is product template (PT) domain. The Proton acceptor; for dehydratase activity role is filled by His-1372. The tract at residues 1510 to 1658 (LTHYNTKSGY…LRSVPRKALR (149 aa)) is C-terminal hotdog fold. The active-site Proton donor; for dehydratase activity is the Asp-1570. The disordered stretch occupies residues 1665–1734 (MDKGIRQRGG…AALKASVPKA (70 aa)). Residues 1677–1698 (GAAKGAVAAPAPAKKMVEPVKA) are compositionally biased toward low complexity. Positions 1708-1723 (AAPPSPSKAAPPPAPK) are enriched in pro residues. Over residues 1724-1734 (PAALKASVPKA) the composition is skewed to low complexity. 3 consecutive Carrier domains span residues 1733–1812 (KADP…AGAA), 1877–1953 (SKVF…GGSG), and 2020–2099 (VART…TGSS). Ser-1770, Ser-1911, and Ser-2057 each carry O-(pantetheine 4'-phosphoryl)serine. The span at 2098-2115 (SSADSDSSSVASNPADPA) shows a compositional bias: low complexity. Residues 2098 to 2149 (SSADSDSSSVASNPADPAATPPRSESSDTEPDDEAPSKPKSGPGSTDSCRST) are disordered. Over residues 2140-2149 (PGSTDSCRST) the composition is skewed to polar residues. The tract at residues 2164 to 2393 (TLFLLPDGGG…KARVNYVSDL (230 aa)) is thioesterase/Claisen cyclase (TE/CLC) domain. Ser-2234 (for thioesterase activity) is an active-site residue.

Pantetheine 4'-phosphate serves as cofactor.

The enzyme catalyses hexanoyl-[ACP] + 7 malonyl-CoA + 6 H(+) = noranthrone + holo-[ACP] + 7 CO2 + 7 CoA + 2 H2O. It participates in mycotoxin biosynthesis. In terms of biological role, polyketide synthase; part of the fragmented gene cluster that mediates the biosynthesis of dothistromin (DOTH), a polyketide toxin very similar in structure to the aflatoxin precursor, versicolorin B. The first step of the pathway is the conversion of acetate to norsolorinic acid (NOR) and requires the fatty acid synthase subunits hexA and hexB, as well as the polyketide synthase pksA. PksA combines a hexanoyl starter unit and 7 malonyl-CoA extender units to synthesize the precursor NOR. The hexanoyl starter unit is provided to the acyl-carrier protein (ACP) domain by the fungal fatty acid synthase hexA/hexB. The second step is the conversion of NOR to averantin (AVN) and requires the norsolorinic acid ketoreductase nor1, which catalyzes the dehydration of norsolorinic acid to form (1'S)-averantin. The cytochrome P450 monooxygenase avnA then catalyzes the hydroxylation of AVN to 5'hydroxyaverantin (HAVN). The next step is performed by adhA that transforms HAVN to averufin (AVF). Averufin might then be converted to hydroxyversicolorone by cypX and avfA. Hydroxyversicolorone is further converted versiconal hemiacetal acetate (VHA) by moxY. VHA is then the substrate for the versiconal hemiacetal acetate esterase est1 to yield versiconal (VAL). Versicolorin B synthase vbsA then converts VAL to versicolorin B (VERB) by closing the bisfuran ring. Then, the activity of the versicolorin B desaturase verB leads to versicolorin A (VERA). DotB, a predicted chloroperoxidase, may perform epoxidation of the A-ring of VERA. Alternatively, a cytochrome P450, such as cypX or avnA could catalyze this step. It is also possible that another, uncharacterized, cytochrome P450 enzyme is responsible for this step. Opening of the epoxide could potentially be achieved by the epoxide hydrolase epoA. However, epoA seems not to be required for DOTH biosynthesis, but other epoxide hydrolases may have the ability to complement this hydrolysis. Alternatively, opening of the epoxide ring could be achieved non-enzymatically. The next step is the deoxygenation of ring A to yield the 5,8-dihydroxyanthraquinone which is most likely catalyzed by the NADPH dehydrogenase encoded by ver1. The last stages of DOTH biosynthesis are proposed to involve hydroxylation of the bisfuran. OrdB and norB might have oxidative roles here. An alternative possibility is that cytochrome P450 monoogenases such as avnA and cypX might perform these steps in addition to previously proposed steps. This is Norsolorinic acid synthase from Dothistroma septosporum (Red band needle blight fungus).